The primary structure comprises 419 residues: Vacuolar aspartic protease (419 aa).

Residues 1–22 (MQLSLSALTTVALALTSSLVDA) form the signal peptide. One can recognise a Peptidase A1 domain in the interval 104–415 (YFTEIQIGTP…DLDKNAVGLA (312 aa)). D122 is an active-site residue. C135 and C140 are oxidised to a cystine. N157 is a glycosylation site (N-linked (GlcNAc...) asparagine). D307 is a catalytic residue. A disulfide bond links C341 and C374. N358 carries an N-linked (GlcNAc...) asparagine glycan. The short motif at 417–419 (TKV) is the Microbody targeting signal element.

It belongs to the peptidase A1 family.

Its subcellular location is the vacuole. This chain is Vacuolar aspartic protease (APR1), found in Candida albicans (Yeast).